A 267-amino-acid chain; its full sequence is X-box-binding protein 1 (267 aa).

The Cytoplasmic portion of the chain corresponds to Met-1–Asn-180. Positions Val-35–Arg-56 are disordered. Ser-61 is modified (phosphoserine). Residues Glu-63–Leu-126 enclose the bZIP domain. Residues Lys-65–Arg-87 form a basic motif region. Positions Arg-69–Lys-85 are nuclear localization signal (NLS). The interval Leu-91–Leu-126 is leucine-zipper. A helical; Signal-anchor for type II membrane protein membrane pass occupies residues Ile-181–Ser-198. Residues Phe-199–Leu-267 lie on the Lumenal side of the membrane. The interval Gln-230–Asn-256 is necessary for the translational pausing of its own mRNA.

The protein belongs to the bZIP family. In terms of assembly, isoform 1 interacts with HM13. Isoform 1 interacts with RNF139; the interaction induces ubiquitination and degradation of isoform 1. Isoform 1 interacts (via luminal domain) with DERL1; the interaction obviates the need for ectodomain shedding prior HM13/SPP-mediated XBP1 isoform 1 cleavage. Isoform 1 interacts with isoform 2; the interaction sequesters isoform 2 from the nucleus and enhances isoform 2 degradation in the cytoplasm. Isoform 1 interacts with HDAC3 and AKT1; the interactions occur in endothelial cell (EC) under disturbed flow. Isoform 1 interacts with the oncoprotein FOS. Isoform 2 interacts with ATF6; the interaction occurs in a ER stress-dependent manner and is required for DNA binding to the unfolded protein response element (UPRE). Isoform 2 interacts with PIK3R1; the interaction is direct and induces translocation of XBP1 isoform 2 into the nucleus and the unfolded protein response (UPR) XBP1-dependent target genes activation in a ER stress- and/or insulin-dependent but PI3K-independent manner. Isoform 2 interacts with SIRT1. Isoform 2 interacts with PIK3R1 and PIK3R2; the interactions are direct and induce translocation of XBP1 isoform 2 into the nucleus and the unfolded protein response (UPR) XBP1-dependent target genes activation in a ER stress- and/or insulin-dependent but PI3K-independent manner. Isoform 2 interacts with FOXO1; the interaction is direct and leads to FOXO1 ubiquitination and degradation via the proteasome pathway in hepatocytes. Acetylated by EP300; acetylation positively regulates the transcriptional activity of XBP1 isoform 2. Isoform 2 is deacetylated by SIRT1; deacetylation negatively regulates the transcriptional activity of XBP1 isoform 2. Post-translationally, ubiquitinated, leading to proteasomal degradation in response to ER stress. In terms of processing, X-box-binding protein 1, cytoplasmic form and luminal form are produced by intramembrane proteolytic cleavage of ER membrane-anchored isoform 1 triggered by HM13/SPP in a DERL1-RNF139-dependent and VCP/p97-independent manner. X-box-binding protein 1, luminal form is ubiquitinated leading to proteasomal degradation. Isoform 1 and isoform 2 are expressed at higher level in branch curves of vessel walls and in atherosclerotic plaques relative to healthy segments of the same aortas (at protein level). Expressed in skeletal muscles, plasma cells and pancreatic beta cells. Isoform 1 and isoform 2 are expressed in gonadal adipose tissue. Isoform 1 is expressed in inguinal adipose tissue.

The protein localises to the endoplasmic reticulum. Its subcellular location is the nucleus. It is found in the cytoplasm. The protein resides in the endoplasmic reticulum membrane. It localises to the membrane. Its function is as follows. Functions as a transcription factor during endoplasmic reticulum stress by regulating the unfolded protein response (UPR). Required for cardiac myogenesis and hepatogenesis during embryonic development and the development of secretory tissues such as exocrine pancreas and salivary gland. Involved in differentiation of B lymphocytes to plasma cells and production of immunoglobulins. Modulates the cellular response to ER stress in a PIK3R-dependent manner. Binds to the cis-acting X box present in the promoter regions of major histocompatibility complex class II genes. Involved in VEGF-induced endothelial cell (EC) proliferation and retinal blood vessel formation during embryonic development but also for angiogenesis in adult tissues under ischemic conditions. Also functions as a major regulator of the UPR in obesity-induced insulin resistance and type 2 diabetes for the management of obesity and diabetes prevention. Plays a role in the unconventional cytoplasmic splicing processing of its own mRNA triggered by the endoplasmic reticulum (ER) transmembrane endoribonuclease ERN1: upon ER stress, the emerging XBP1 polypeptide chain, as part of a mRNA-ribosome-nascent chain (R-RNC) complex, cotranslationally recruits its own unprocessed mRNA through transient docking to the ER membrane and translational pausing, therefore facilitating efficient IRE1-mediated XBP1 mRNA isoform 2 production. In endothelial cells (EC), associated with KDR, promotes IRE1-mediated XBP1 mRNA isoform 2 production in a vascular endothelial growth factor (VEGF)-dependent manner, leading to EC proliferation and angiogenesis. Functions as a negative feed-back regulator of the potent transcription factor XBP1 isoform 2 protein levels through proteasome-mediated degradation, thus preventing the constitutive activation of the ER stress response signaling pathway. Inhibits the transactivation activity of XBP1 isoform 2 in myeloma cells. Acts as a weak transcriptional factor. Together with HDAC3, contributes to the activation of NFE2L2-mediated HMOX1 transcription factor gene expression in a PI(3)K/mTORC2/Akt-dependent signaling pathway leading to EC survival under disturbed flow/oxidative stress. Binds to the ER stress response element (ERSE) upon ER stress. Binds to the consensus 5'-GATGACGTG[TG]N(3)[AT]T-3' sequence related to cAMP responsive element (CRE)-like sequences. Binds the Tax-responsive element (TRE) present in the long terminal repeat (LTR) of T-cell leukemia virus type 1 (HTLV-I) and to the TPA response elements (TRE). Associates preferentially to the HDAC3 gene promoter region in a static flow-dependent manner. Binds to the CDH5/VE-cadherin gene promoter region. Functionally, functions as a stress-inducible potent transcriptional activator during endoplasmic reticulum (ER) stress by inducing unfolded protein response (UPR) target genes via binding to the UPR element (UPRE). Up-regulates target genes encoding ER chaperones and ER-associated degradation (ERAD) components to enhance the capacity of productive folding and degradation mechanism, respectively, in order to maintain the homeostasis of the ER under ER stress. Plays a role in the production of immunoglobulins and interleukin-6 in the presence of stimuli required for plasma cell differentiation, and promotes as well membrane phospholipid biosynthesis necessary for ER expansion. Contributes to the VEGF-induced endothelial cell (EC) growth and proliferation in a Akt/GSK-dependent and/or -independent signaling pathway, respectively, leading to beta-catenin nuclear translocation and E2F2 gene expression. Promotes umbilical vein EC apoptosis and atherosclerotisis development in a caspase-dependent signaling pathway, and contributes to VEGF-induced EC proliferation and angiogenesis in adult tissues under ischemic conditions. Involved in the regulation of endostatin-induced autophagy in EC through BECN1 transcriptional activation. Plays a role as an oncogene by promoting tumor progression: stimulates zinc finger protein SNAI1 transcription to induce epithelial-to-mesenchymal (EMT) transition, cell migration and invasion of breast cancer cells. Involved in adipocyte differentiation by regulating lipogenic gene expression during lactation. Plays a role in the survival of both dopaminergic neurons of the substantia nigra pars compacta (SNpc), by maintaining protein homeostasis and of myeloma cells. Increases insulin sensitivity in the liver as a response to a high carbohydrate diet, resulting in improved glucose tolerance. Also improves glucose homeostasis in an ER stress- and/or insulin-independent manner through both binding and proteasome-induced degradation of the transcription factor FOXO1, hence resulting in suppression of gluconeogenic genes expression and in a reduction of blood glucose levels. Controls the induction of de novo fatty acid synthesis in hepatocytes by regulating the expression of a subset of lipogenic genes in an ER stress- and UPR-independent manner. Binds to the 5'-CCACG-3' motif in the PPARG promoter. Associates preferentially to the HDAC3 gene promoter region in a disturbed flow-dependent manner. Binds to the BECN1 gene promoter region. Binds to the CDH5/VE-cadherin gene promoter region. Binds to the ER stress response element (ERSE) upon ER stress. The polypeptide is X-box-binding protein 1 (Mus musculus (Mouse)).